Here is a 149-residue protein sequence, read N- to C-terminus: Calmodulin (149 aa).

Ala-2 is subject to N-acetylalanine. EF-hand domains follow at residues Glu-8 to Asn-43, Pro-44 to Asp-79, Asp-81 to Lys-116, and Leu-117 to Lys-149. 14 residues coordinate Ca(2+): Asp-21, Asp-23, Asp-25, Thr-27, Glu-32, Asp-57, Asp-59, Asn-61, Thr-63, Glu-68, Asp-94, Asp-96, Asn-98, and Glu-105. The residue at position 116 (Lys-116) is an N6,N6,N6-trimethyllysine. Ca(2+) contacts are provided by Asp-130, Asp-132, Asp-134, His-136, and Glu-141.

Belongs to the calmodulin family.

In terms of biological role, calmodulin mediates the control of a large number of enzymes, ion channels and other proteins by Ca(2+). Among the enzymes to be stimulated by the calmodulin-Ca(2+) complex are a number of protein kinases and phosphatases. In Tetrahymena pyriformis, this protein is Calmodulin.